We begin with the raw amino-acid sequence, 380 residues long: Chaperone protein DnaJ (380 aa).

In terms of domain architecture, J spans 5–69 (DYYEILGVSK…QKRAHYDQFG (65 aa)). The CR-type zinc-finger motif lies at 135-217 (GKETDIEIPR…CGGTGRVKKR (83 aa)). Residues cysteine 148, cysteine 151, cysteine 165, cysteine 168, cysteine 191, cysteine 194, cysteine 205, and cysteine 208 each contribute to the Zn(2+) site. CXXCXGXG motif repeat units follow at residues 148–155 (CDTCHGTG), 165–172 (CSYCHGTG), 191–198 (CPYCGGTG), and 205–212 (CTTCGGTG).

Belongs to the DnaJ family. Homodimer. Zn(2+) is required as a cofactor.

Its subcellular location is the cytoplasm. Participates actively in the response to hyperosmotic and heat shock by preventing the aggregation of stress-denatured proteins and by disaggregating proteins, also in an autonomous, DnaK-independent fashion. Unfolded proteins bind initially to DnaJ; upon interaction with the DnaJ-bound protein, DnaK hydrolyzes its bound ATP, resulting in the formation of a stable complex. GrpE releases ADP from DnaK; ATP binding to DnaK triggers the release of the substrate protein, thus completing the reaction cycle. Several rounds of ATP-dependent interactions between DnaJ, DnaK and GrpE are required for fully efficient folding. Also involved, together with DnaK and GrpE, in the DNA replication of plasmids through activation of initiation proteins. The protein is Chaperone protein DnaJ of Geobacillus sp. (strain WCH70).